Here is a 715-residue protein sequence, read N- to C-terminus: Zinc finger protein 544 (715 aa).

In terms of domain architecture, KRAB spans 14–85; the sequence is VCFEDVAMAF…EQEAPRDWKA (72 aa). Glycyl lysine isopeptide (Lys-Gly) (interchain with G-Cter in SUMO2) cross-links involve residues K273 and K289. The C2H2-type 1; atypical zinc-finger motif lies at 354–374; the sequence is SVCNQCGKSFSCCKLIHQRTH. C2H2-type zinc fingers lie at residues 380-402, 408-430, 436-458, 464-486, 492-514, 520-542, 548-570, 576-598, 604-626, 632-654, 660-682, and 688-710; these read FECT…QRTH, YECD…QRIH, YQCI…QRIH, YECT…KRTH, FKCT…QRTH, YECN…QRIH, YDCT…KRTH, YECN…LQIH, YKCN…QRTH, FECS…HRIH, and YECS…RRTH. K534 is covalently cross-linked (Glycyl lysine isopeptide (Lys-Gly) (interchain with G-Cter in SUMO2)).

This sequence belongs to the krueppel C2H2-type zinc-finger protein family.

The protein localises to the nucleus. Functionally, may be involved in transcriptional regulation. The polypeptide is Zinc finger protein 544 (ZNF544) (Homo sapiens (Human)).